A 71-amino-acid chain; its full sequence is DNA-directed RNA polymerase subunit omega (71 aa).

It belongs to the RNA polymerase subunit omega family. The RNAP catalytic core consists of 2 alpha, 1 beta, 1 beta' and 1 omega subunit. When a sigma factor is associated with the core the holoenzyme is formed, which can initiate transcription.

It carries out the reaction RNA(n) + a ribonucleoside 5'-triphosphate = RNA(n+1) + diphosphate. Promotes RNA polymerase assembly. Latches the N- and C-terminal regions of the beta' subunit thereby facilitating its interaction with the beta and alpha subunits. The polypeptide is DNA-directed RNA polymerase subunit omega (Aromatoleum aromaticum (strain DSM 19018 / LMG 30748 / EbN1) (Azoarcus sp. (strain EbN1))).